A 635-amino-acid polypeptide reads, in one-letter code: Capsid protein (635 aa).

The interval 571-608 is disordered; that stretch reads KAPETEKEEERESETSFTSAESSSEGDGSSDDQAERRA. The segment covering 573 to 584 has biased composition (basic and acidic residues); the sequence is PETEKEEERESE. The segment covering 585-597 has biased composition (low complexity); that stretch reads TSFTSAESSSEGD.

Belongs to the anelloviridae capsid protein family.

It localises to the virion. Its function is as follows. Self-assembles to form an icosahedral capsid with a T=1 symmetry, about 30 nm in diameter, and consisting of 60 capsid proteins. The capsid encapsulates the genomic DNA. Capsid protein is involved in attachment and entry into the host cell. In Torque teno sus virus 1 (isolate Sd-TTV31), this protein is Capsid protein.